The following is a 310-amino-acid chain: Delta(1)-pyrroline-2-carboxylate reductase 1 (310 aa).

Belongs to the ornithine cyclodeaminase/mu-crystallin family.

The enzyme catalyses L-proline + NAD(+) = 1-pyrroline-2-carboxylate + NADH + H(+). The catalysed reaction is L-proline + NADP(+) = 1-pyrroline-2-carboxylate + NADPH + H(+). Catalyzes the reduction of Delta(1)-pyrroline-2-carboxylate (Pyr2C) to L-proline, using NADPH as the electron donor. May be involved in a degradation pathway that converts trans-3-hydroxy-L-proline (t3LHyp) to L-proline. In Burkholderia multivorans (strain ATCC 17616 / 249), this protein is Delta(1)-pyrroline-2-carboxylate reductase 1.